The chain runs to 289 residues: NAD(P)H-hydrate epimerase (289 aa).

A YjeF N-terminal domain is found at 71-277; it reads AQTIDNELMS…SIVEKYNLKI (207 aa). Residue 122 to 126 coordinates (6S)-NADPHX; sequence NNGGD. Positions 123 and 185 each coordinate K(+). (6S)-NADPHX is bound by residues 189–195 and D218; that span reads GFSFRGE. Residue S221 participates in K(+) binding.

It belongs to the NnrE/AIBP family. Requires K(+) as cofactor.

The catalysed reaction is (6R)-NADHX = (6S)-NADHX. The enzyme catalyses (6R)-NADPHX = (6S)-NADPHX. Its function is as follows. Catalyzes the epimerization of the S- and R-forms of NAD(P)HX, a damaged form of NAD(P)H that is a result of enzymatic or heat-dependent hydration. This is a prerequisite for the S-specific NAD(P)H-hydrate dehydratase to allow the repair of both epimers of NAD(P)HX. The chain is NAD(P)H-hydrate epimerase from Plasmodium knowlesi (strain H).